A 288-amino-acid polypeptide reads, in one-letter code: Bifunctional protein FolD (288 aa).

Residues 166–168, serine 191, and isoleucine 232 contribute to the NADP(+) site; that span reads GRS.

The protein belongs to the tetrahydrofolate dehydrogenase/cyclohydrolase family. In terms of assembly, homodimer.

The catalysed reaction is (6R)-5,10-methylene-5,6,7,8-tetrahydrofolate + NADP(+) = (6R)-5,10-methenyltetrahydrofolate + NADPH. The enzyme catalyses (6R)-5,10-methenyltetrahydrofolate + H2O = (6R)-10-formyltetrahydrofolate + H(+). Its pathway is one-carbon metabolism; tetrahydrofolate interconversion. Functionally, catalyzes the oxidation of 5,10-methylenetetrahydrofolate to 5,10-methenyltetrahydrofolate and then the hydrolysis of 5,10-methenyltetrahydrofolate to 10-formyltetrahydrofolate. The polypeptide is Bifunctional protein FolD (Rickettsia africae (strain ESF-5)).